Here is a 141-residue protein sequence, read N- to C-terminus: Subtilase cytotoxin subunit B (141 aa).

Positions 1 to 23 are cleaved as a signal peptide; that stretch reads MTIKRFFVCAGIMGCLSLNPAMA. Residues 33-35 and glutamine 59 contribute to the N-glycoloyl-alpha-neuraminate site; that span reads MFS. The interval 89 to 94 is hydrophobic patch important for binding to SubA; sequence YFYTTG. Tyrosine 101 provides a ligand contact to N-glycoloyl-alpha-neuraminate.

Forms a complex with SubA with the stoichiometry SubA1:SubB5 (called SubAB5). Each SubB subunit makes different contacts with the single SubA subunit. This subunit alone forms pentamers.

The protein localises to the secreted. Its subcellular location is the host cytoplasm. The protein resides in the host cytosol. It localises to the host endoplasmic reticulum lumen. Receptor-binding subunit of subtilase cytotoxin SubAB5. Required for receptor-binding and thus correct trafficking in the host cell. Has specificity for host glycans terminating in the sialic acid N-glycolyl-alpha-neuraminic acid (Neu5Gc); each subunit in the SubB pentamer binds one Neu5Gc. The protease subunit (SubA) cleaves host BiP/HSPA5, inducing the host endoplasmic reticulum stress response and eventual cell death. Culture supernatant of E.coli expressing both subA and subB are toxic for Vero cells (African green monkey kidney cell line), Chinese hamster ovary cells and Hct-8 cells (human colonic epithelial cell line); the subunits are not toxic individually. Purified SubAB5 is highly toxic, &lt;0.1 pg is able to kill at least 50% of 30'000 Vero cells in a microtiter plate assay after 3 days; no cytotoxicity is seen at 24 hours. Preabsorption with cells expressing a ganglioside GM2 mimic reduced cytotoxicity of SubAB5 by 93% in the Vero cytotoxicity assay. Intraperitoneal injection of 200 ng of purified SubAB5 kills mice; the higher the dose the faster the mice die. Animals injected with purified SubAB5 have microvascular thrombi in the brain and other organs, including the renal tubules and glomeruli. Mice fed E.coli cells expressing cloned SubAB5 experience drastic weight loss and appear ill and lethargic. SubB alone at 2.5 ug/ml causes vacuolation of Vero cells, which requires the V-type ATPase proton pump; treated cells die. Protein synthesis in Vero cells is transiently inhibited by SubAB5; both subunits are required for this effect. Inhibition of protein synthesis is prevented by brefeldin A; cells are arrested in the G1 phase. SubAB5 at 100 ng/ml induced caspase-dependent apoptosis in Vero cells through mitochondrial membrane damage. The chain is Subtilase cytotoxin subunit B from Escherichia coli.